A 451-amino-acid polypeptide reads, in one-letter code: Glucose-6-phosphate isomerase (451 aa).

Glutamate 291 acts as the Proton donor in catalysis. Active-site residues include histidine 312 and lysine 426.

It belongs to the GPI family.

It localises to the cytoplasm. It catalyses the reaction alpha-D-glucose 6-phosphate = beta-D-fructose 6-phosphate. It functions in the pathway carbohydrate biosynthesis; gluconeogenesis. It participates in carbohydrate degradation; glycolysis; D-glyceraldehyde 3-phosphate and glycerone phosphate from D-glucose: step 2/4. Functionally, catalyzes the reversible isomerization of glucose-6-phosphate to fructose-6-phosphate. The sequence is that of Glucose-6-phosphate isomerase from Thermoanaerobacter sp. (strain X514).